The following is a 184-amino-acid chain: Protein DMP2 (184 aa).

4 helical membrane passes run 19-39, 45-65, 105-125, and 142-162; these read LIKL…PVLT, LLIN…SCCF, VGDF…SLLD, and IFLM…FTVF.

The protein belongs to the plant DMP1 protein family. Expressed constitutively in leaves, stems, flowers, siliques and roots.

The protein localises to the endoplasmic reticulum membrane. The protein resides in the vacuole membrane. In terms of biological role, involved in membrane remodeling. The polypeptide is Protein DMP2 (Arabidopsis thaliana (Mouse-ear cress)).